Here is a 192-residue protein sequence, read N- to C-terminus: Signal peptidase complex catalytic subunit sec11 (192 aa).

Residues 1–18 (MLSFLSSNLSSTRQSMAQ) lie on the Cytoplasmic side of the membrane. Residues 19–39 (VLNFALVLSTAFMLWKGLSVF) traverse the membrane as a helical; Signal-anchor for type II membrane protein segment. At 40–192 (TASSSPIVVV…GLMVILQREQ (153 aa)) the chain is on the lumenal side. Catalysis depends on charge relay system residues Ser53, His92, and Asp133. Residues 177–188 (VLLGIMGLMVIL) form a C-terminal short (CTS) helix region.

It belongs to the peptidase S26B family. As to quaternary structure, component of the signal peptidase complex (SPC) composed of a catalytic subunit SEC11 and three accessory subunits SPC1, SPC2 and SPC3. The complex induces a local thinning of the ER membrane which is used to measure the length of the signal peptide (SP) h-region of protein substrates. This ensures the selectivity of the complex towards h-regions shorter than 18-20 amino acids. SPC associates with the translocon complex.

The protein resides in the endoplasmic reticulum membrane. It catalyses the reaction Cleavage of hydrophobic, N-terminal signal or leader sequences from secreted and periplasmic proteins.. Catalytic component of the signal peptidase complex (SPC) which catalyzes the cleavage of N-terminal signal sequences from nascent proteins as they are translocated into the lumen of the endoplasmic reticulum. Specifically cleaves N-terminal signal peptides that contain a hydrophobic alpha-helix (h-region) shorter than 18-20 amino acids. The protein is Signal peptidase complex catalytic subunit sec11 (sec11) of Aspergillus fumigatus (strain CBS 144.89 / FGSC A1163 / CEA10) (Neosartorya fumigata).